Reading from the N-terminus, the 242-residue chain is Carbendazim hydrolyzing esterase (242 aa).

S77 (acyl-ester intermediate) is an active-site residue.

Belongs to the AB hydrolase superfamily.

The protein localises to the secreted. The enzyme catalyses carbendazim + H2O = 2-aminobenzimidazole + methanol + CO2. The catalysed reaction is carbendazim + H2O = N-(1H-1,3-benzodiazol-2-yl)carbamate + methanol + H(+). It catalyses the reaction N-(1H-1,3-benzodiazol-2-yl)carbamate + H(+) = 2-aminobenzimidazole + CO2. Its function is as follows. Catalyzes the hydrolysis of the fungicide carbendazim (methyl-1H-benzimidazol-2-ylcarbamate or MBC) to 2-aminobenzimidazole (2-AB). Following hydrolysis of the carbamate ester, the carbamate decarboxylates spontaneously. Can hydrolyze model carboxylesters such as methyl salicylate, alpha-naphthyl acetate and p-nitrophenyl acetate. In addition, shows substantial hydrolytic activity in vitro against widespread pollutants with carboxylester, carbamate and amide linkages, such as dimethyl phthalate, propanil and chlorpropham. The sequence is that of Carbendazim hydrolyzing esterase from Nocardioides sp. (strain SG-4G).